A 290-amino-acid polypeptide reads, in one-letter code: Large ribosomal subunit protein uL3 (290 aa).

Gln152 bears the N5-methylglutamine mark. A disordered region spans residues 250–290; it reads ARLAEEQAAAEAESLAQAEAEIAAEGSDAAPEGDADKKDGE. Positions 255–274 are enriched in low complexity; the sequence is EQAAAEAESLAQAEAEIAAE.

It belongs to the universal ribosomal protein uL3 family. Part of the 50S ribosomal subunit. Forms a cluster with proteins L14 and L19. In terms of processing, methylated by PrmB.

Its function is as follows. One of the primary rRNA binding proteins, it binds directly near the 3'-end of the 23S rRNA, where it nucleates assembly of the 50S subunit. The chain is Large ribosomal subunit protein uL3 from Jannaschia sp. (strain CCS1).